A 525-amino-acid chain; its full sequence is Probable pectinesterase/pectinesterase inhibitor 44 (525 aa).

The first 19 residues, M1–S19, serve as a signal peptide directing secretion. The pectinesterase inhibitor 44 stretch occupies residues V30 to L153. N98 is a glycosylation site (N-linked (GlcNAc...) asparagine). A disordered region spans residues E157 to F192. Positions D212–N509 are pectinesterase 44. N222 and N278 each carry an N-linked (GlcNAc...) asparagine glycan. Substrate contacts are provided by T287 and Q317. Residue D340 is the Proton donor; for pectinesterase activity of the active site. A disulfide bridge connects residues C354 and C374. The Nucleophile; for pectinesterase activity role is filled by D361. 2 N-linked (GlcNAc...) asparagine glycosylation sites follow: N409 and N421. Residues R429 and W431 each coordinate substrate. 3 N-linked (GlcNAc...) asparagine glycosylation sites follow: N443, N492, and N499.

In the N-terminal section; belongs to the PMEI family. This sequence in the C-terminal section; belongs to the pectinesterase family. In terms of tissue distribution, expressed in siliques.

The protein resides in the secreted. The protein localises to the cell wall. The enzyme catalyses [(1-&gt;4)-alpha-D-galacturonosyl methyl ester](n) + n H2O = [(1-&gt;4)-alpha-D-galacturonosyl](n) + n methanol + n H(+). It functions in the pathway glycan metabolism; pectin degradation; 2-dehydro-3-deoxy-D-gluconate from pectin: step 1/5. Acts in the modification of cell walls via demethylesterification of cell wall pectin. In Arabidopsis thaliana (Mouse-ear cress), this protein is Probable pectinesterase/pectinesterase inhibitor 44 (PME44).